A 1216-amino-acid chain; its full sequence is MPQKINYELKNFGQYTKRRDYSKTRFSLPLTDVLAIQKESFDWFLNKAIEATLRKYYPIKSSNNKVEIKYVLGSKRIEKPLVTEQKAVKEAKQKGISYSARLYVKLQKHITETGEISFDEVILCDIPLMTSSGSFIINGFEKVIVSQLIRSPGAYFAQKTRDKQSDDLFNKVEVLPRIGSWIEIKHKVTSNLDSVKIKIDKHKSFLLTTFLSSFGFTEESMYKLFGNSETLKNTLSKDKILGKNKDIVEIRKEAQENIFRIVRRGDRITKEASQNLISNLLFNEKRYNLSKTGRYMLNRKLSLFDRIITTYLAQDIVLKNVDPTMEAKILYPKGTYITNDIAIEIQNAFKEGLIKNIDLKDYGITSDVYGKLLDTNPKLKNRMNIIGIYIFKSKKAMEKDGEKHFVIGNDPTSVENHLLISDIVAIINYYFNLNENIGRDDDPDSLINKRIVSVGELLLNQLNIGLLKMEKNTREKMSSKEISRITPKNITNNKMIQNQIKTFFNSSKLSQFMDQTNPLSEISTKRKITSLGPGGLNRDTAQFEVRDVHATHYGRICPIETPEGPNIGLILNLATYAKVDEYGFLQTPYFKVTNGIVDFSQPVYLTAHEEINRTFAQSSISIDENGKITDEQVIVKSNFDYNVVSPKEVDYIDVSSKQMTSLAASSIPFLENNDANRALMGSNMQRQAVPLLFAEAPLVATGIEADIAKFSPNNLKSTVDGEVVFVDGSQIKIKDSASEKGSIKTYQLKTFEKTNQGTVISQSPIVKMGDKVLKGDLISDSSSFKDGEMALGKNVLVGFSTWNGYNYEDAIIVSERLVKDDVFTSIHIEEQTIQFRKSKAGDDKLTADIPNASLKSRRHLDENGIVRIGSEVVTGDILVGRVSPKGDENISPAEKLLNGIFNQKISNEKDTSLKVKNGHQGTVIDVEILSRENGNVLEEEIDMMIKVYVAQKRKIKVGDKMAGRHGNKGVISRVLPVEDMPYLEDGTPLDIILNPQGVPSRMNIGQVLELHLGMAAKKLGVKFVSPVFDGVKKADIMDALEEAKLPRTGKMKVFDPTTGEKIDNEISVGVMYMFKLSHMVDDKMHSRSIGPYSLITQQPLGGKSQNGGQRFGEMETWALESYGAANILQEILTYKSDDIQGRNNLYSALTSGTKLPKPGVPESFSVLAYELRGLGIKLQIHEKEEEKQELPSQEYESLNLDQELKTASENVSESEF.

The segment at E1185–F1216 is disordered. The span at L1190–F1216 shows a compositional bias: polar residues.

It belongs to the RNA polymerase beta chain family. The RNAP catalytic core consists of 2 alpha, 1 beta, 1 beta' and 1 omega subunit. When a sigma factor is associated with the core the holoenzyme is formed, which can initiate transcription.

It carries out the reaction RNA(n) + a ribonucleoside 5'-triphosphate = RNA(n+1) + diphosphate. In terms of biological role, DNA-dependent RNA polymerase catalyzes the transcription of DNA into RNA using the four ribonucleoside triphosphates as substrates. The chain is DNA-directed RNA polymerase subunit beta from Mycoplasmopsis pulmonis (strain UAB CTIP) (Mycoplasma pulmonis).